The following is a 197-amino-acid chain: Shikimate kinase (197 aa).

26–31 (GSGKSR) lines the ATP pocket. Serine 30 contributes to the Mg(2+) binding site. Substrate contacts are provided by aspartate 48, arginine 72, and glycine 94. Arginine 132 provides a ligand contact to ATP. Arginine 150 contributes to the substrate binding site.

The protein belongs to the shikimate kinase family. As to quaternary structure, monomer. The cofactor is Mg(2+).

Its subcellular location is the cytoplasm. It catalyses the reaction shikimate + ATP = 3-phosphoshikimate + ADP + H(+). Its pathway is metabolic intermediate biosynthesis; chorismate biosynthesis; chorismate from D-erythrose 4-phosphate and phosphoenolpyruvate: step 5/7. Functionally, catalyzes the specific phosphorylation of the 3-hydroxyl group of shikimic acid using ATP as a cosubstrate. This Prochlorococcus marinus (strain MIT 9211) protein is Shikimate kinase.